The sequence spans 292 residues: 33 kDa chaperonin (292 aa).

Cystine bridges form between Cys-230–Cys-232 and Cys-263–Cys-266.

The protein belongs to the HSP33 family. Post-translationally, under oxidizing conditions two disulfide bonds are formed involving the reactive cysteines. Under reducing conditions zinc is bound to the reactive cysteines and the protein is inactive.

The protein resides in the cytoplasm. Functionally, redox regulated molecular chaperone. Protects both thermally unfolding and oxidatively damaged proteins from irreversible aggregation. Plays an important role in the bacterial defense system toward oxidative stress. This chain is 33 kDa chaperonin, found in Cronobacter sakazakii (strain ATCC BAA-894) (Enterobacter sakazakii).